Here is a 143-residue protein sequence, read N- to C-terminus: Nucleoside diphosphate kinase (143 aa).

Positions 1–132 (MVKPDGVQRG…LWFSPQELCQ (132 aa)) constitute an NDPK-like domain. Positions 3, 51, 79, 85, 96, 103, and 106 each coordinate ADP. 5 residues coordinate ATP: lysine 3, phenylalanine 51, arginine 79, threonine 85, and arginine 96. Residue asparagine 106 coordinates ATP. The Pros-phosphohistidine intermediate role is filled by histidine 109.

It belongs to the NDK family. As to quaternary structure, homohexamer. Requires Mg(2+) as cofactor.

The catalysed reaction is a 2'-deoxyribonucleoside 5'-diphosphate + ATP = a 2'-deoxyribonucleoside 5'-triphosphate + ADP. It catalyses the reaction a ribonucleoside 5'-diphosphate + ATP = a ribonucleoside 5'-triphosphate + ADP. The enzyme catalyses GDP + ATP = GTP + ADP. Its pathway is purine metabolism; purine nucleotide biosynthesis. In terms of biological role, major role in the synthesis of nucleoside triphosphates other than ATP. The ATP gamma phosphate is transferred to the NDP beta phosphate via a ping-pong mechanism, using a phosphorylated active-site intermediate. This is Nucleoside diphosphate kinase from Schistosoma mansoni (Blood fluke).